We begin with the raw amino-acid sequence, 145 residues long: Basic phospholipase A2 PC17 (145 aa).

The signal sequence occupies residues 1–21; that stretch reads MYPAHLLLLLAVCVSLLGASA. The propeptide occupies 22 to 27; it reads IPPLPL. 7 disulfide bridges follow: C38–C98, C54–C144, C56–C72, C71–C125, C78–C118, C87–C111, and C105–C116. 3 residues coordinate Ca(2+): Y55, G57, and G59. Residue H75 is part of the active site. D76 contributes to the Ca(2+) binding site. D119 is an active-site residue.

This sequence belongs to the phospholipase A2 family. Group I subfamily. D49 sub-subfamily. Requires Ca(2+) as cofactor.

Its subcellular location is the secreted. The catalysed reaction is a 1,2-diacyl-sn-glycero-3-phosphocholine + H2O = a 1-acyl-sn-glycero-3-phosphocholine + a fatty acid + H(+). PLA2 catalyzes the calcium-dependent hydrolysis of the 2-acyl groups in 3-sn-phosphoglycerides. In Laticauda laticaudata (Blue-ringed sea krait), this protein is Basic phospholipase A2 PC17.